A 277-amino-acid chain; its full sequence is Peptide deformylase 1A, chloroplastic (277 aa).

Zn(2+) is bound by residues C196 and H238. Residue E239 is part of the active site. Position 242 (H242) interacts with Zn(2+).

This sequence belongs to the polypeptide deformylase family. The cofactor is Zn(2+).

The protein resides in the plastid. It is found in the chloroplast stroma. The enzyme catalyses N-terminal N-formyl-L-methionyl-[peptide] + H2O = N-terminal L-methionyl-[peptide] + formate. Its function is as follows. Removes the formyl group from the N-terminal Met of newly synthesized proteins. The sequence is that of Peptide deformylase 1A, chloroplastic (PDF1A) from Solanum lycopersicum (Tomato).